The sequence spans 414 residues: uncharacterized protein (414 aa).

Topologically, residues 1-66 are lumenal; the sequence is MNPSVPKVMK…LQRISKDYLK (66 aa). Positions 20–51 are disordered; that stretch reads SKEMNDTSLQLPSTTRSLSPKESNSNEDFNVD. Polar residues predominate over residues 25 to 51; sequence DTSLQLPSTTRSLSPKESNSNEDFNVD. K40 participates in a covalent cross-link: Glycyl lysine isopeptide (Lys-Gly) (interchain with G-Cter in ubiquitin). A helical transmembrane segment spans residues 67–87; the sequence is PNIGLVLLTVSYFFNSAMVVS. Residues 78-215 form the EamA 1 domain; that stretch reads YFFNSAMVVS…SLLGVVLIVR (138 aa). Over 88–106 the chain is Cytoplasmic; it reads TKVLENDPDDIANDRQIKP. Residues 107 to 127 form a helical membrane-spanning segment; that stretch reads LQILLVRMVITYIGTLIYMYI. Residues 128-144 lie on the Lumenal side of the membrane; that stretch reads NKSTISDVPFGKPEVRK. A helical membrane pass occupies residues 145-167; it reads WLVLRGCTGFFGVFGMYYSLMYL. The Cytoplasmic portion of the chain corresponds to 168–171; sequence TISD. Residues 172-191 traverse the membrane as a helical segment; it reads AVLITFLAPSLTIFLSWVIL. At 192–199 the chain is on the lumenal side; it reads RERFTKVE. A helical transmembrane segment spans residues 200 to 220; it reads ALGSLISLLGVVLIVRPSFLF. At 221-241 the chain is on the cytoplasmic side; that stretch reads GTPELTDSSSQIVESSDPKSR. A helical membrane pass occupies residues 242 to 262; that stretch reads LIATLVGLWGVLGMSCVYIII. The region spanning 253 to 379 is the EamA 2 domain; sequence LGMSCVYIII…IISATLWVIR (127 aa). Over 263 to 269 the chain is Lumenal; that stretch reads RYIGKRA. Residues 270 to 290 traverse the membrane as a helical segment; the sequence is HAIMSVSYFSLITAIVSFIGI. At 291 to 307 the chain is on the cytoplasmic side; it reads NTIPSMKFQIPHSKKQW. Residues 308-328 form a helical membrane-spanning segment; the sequence is ILFGNLGVSGFIFQLLLTMGI. Topologically, residues 329–357 are lumenal; the sequence is QRERAGRGSLMTYTQLLYAVFWDVALYKH. The helical transmembrane segment at 358 to 378 threads the bilayer; that stretch reads WPNIWSWIGMIIIISATLWVI. The Cytoplasmic portion of the chain corresponds to 379–414; that stretch reads RIRAANNETTAKDLTPIIDDEENSIPLTEFDLSDSK.

The protein to yeast YPL264c.

The protein localises to the membrane. This is an uncharacterized protein from Saccharomyces cerevisiae (strain ATCC 204508 / S288c) (Baker's yeast).